Here is a 456-residue protein sequence, read N- to C-terminus: Glycerol-3-phosphate acyltransferase 4 (456 aa).

A signal peptide spans 1–37 (MFLLLPFDSLIVNLLGISLTVLFTLLLVFIIVPAIFG). 2 consecutive transmembrane segments (helical) span residues 156–176 (ISLR…CFLL) and 180–200 (IALA…VGYL). N-linked (GlcNAc...) asparagine glycosylation is present at Asn-247. The HXXXXD motif motif lies at 248-253 (HTSPID). N-linked (GlcNAc...) asparagine glycosylation is found at Asn-327, Asn-328, and Asn-362.

Belongs to the 1-acyl-sn-glycerol-3-phosphate acyltransferase family.

The protein localises to the endoplasmic reticulum membrane. The enzyme catalyses sn-glycerol 3-phosphate + an acyl-CoA = a 1-acyl-sn-glycero-3-phosphate + CoA. It catalyses the reaction dodecanoyl-CoA + sn-glycerol 3-phosphate = 1-dodecanoyl-sn-glycerol 3-phosphate + CoA. The catalysed reaction is sn-glycerol 3-phosphate + hexadecanoyl-CoA = 1-hexadecanoyl-sn-glycero-3-phosphate + CoA. It carries out the reaction sn-glycerol 3-phosphate + octadecanoyl-CoA = 1-octadecanoyl-sn-glycero-3-phosphate + CoA. The enzyme catalyses sn-glycerol 3-phosphate + (9Z)-octadecenoyl-CoA = 1-(9Z-octadecenoyl)-sn-glycero-3-phosphate + CoA. It catalyses the reaction (9Z,12Z)-octadecadienoyl-CoA + sn-glycerol 3-phosphate = 1-(9Z,12Z)-octadecadienoyl-sn-glycero-3-phosphate + CoA. The protein operates within phospholipid metabolism; CDP-diacylglycerol biosynthesis; CDP-diacylglycerol from sn-glycerol 3-phosphate: step 1/3. Its function is as follows. Converts glycerol-3-phosphate to 1-acyl-sn-glycerol-3-phosphate (lysophosphatidic acid or LPA) by incorporating an acyl moiety at the sn-1 position of the glycerol backbone. Active against both saturated and unsaturated long-chain fatty acyl-CoAs. Protects cells against lipotoxicity. In Pongo abelii (Sumatran orangutan), this protein is Glycerol-3-phosphate acyltransferase 4.